Here is a 120-residue protein sequence, read N- to C-terminus: Large ribosomal subunit protein eL18 (120 aa).

Belongs to the eukaryotic ribosomal protein eL18 family.

This chain is Large ribosomal subunit protein eL18, found in Methanococcus maripaludis (strain DSM 14266 / JCM 13030 / NBRC 101832 / S2 / LL).